We begin with the raw amino-acid sequence, 234 residues long: UPF0758 protein Smal_0281 (234 aa).

An MPN domain is found at 103–225; it reads VGNNPAAVGR…PVSFAERGLL (123 aa). Zn(2+) is bound by residues H174, H176, and D187. A JAMM motif motif is present at residues 174-187; it reads HNHPSGDPEPSSAD.

The protein belongs to the UPF0758 family.

This is UPF0758 protein Smal_0281 from Stenotrophomonas maltophilia (strain R551-3).